The sequence spans 322 residues: Cyanophycinase (322 aa).

Active-site charge relay system residues include S178, E196, and H220.

The protein belongs to the peptidase S51 family.

The catalysed reaction is [L-4-(L-arginin-2-N-yl)aspartate](n) + H2O = [L-4-(L-arginin-2-N-yl)aspartate](n-1) + L-4-(L-arginin-2-N-yl)aspartate. In terms of biological role, exopeptidase that catalyzes the hydrolytic cleavage of multi-L-arginyl-poly-L-aspartic acid (cyanophycin; a water-insoluble reserve polymer) into aspartate-arginine dipeptides. This is Cyanophycinase (cphB) from Synechococcus elongatus.